The primary structure comprises 315 residues: Olfactory receptor 8J3 (315 aa).

Topologically, residues 1–25 (MAPENFTRVTEFILTGVSSCPELQI) are extracellular. A glycan (N-linked (GlcNAc...) asparagine) is linked at asparagine 5. Residues 26–46 (PLFLVFLVLYVLTMAGNLGII) form a helical membrane-spanning segment. The Cytoplasmic portion of the chain corresponds to 47 to 54 (TLTSVDSR). Residues 55-75 (LQNPMYFFLRHLAIINLGNST) form a helical membrane-spanning segment. The Extracellular portion of the chain corresponds to 76–99 (VIAPKMLMNFLVKKKTTSFYECAT). Cysteine 97 and cysteine 189 are joined by a disulfide. A helical transmembrane segment spans residues 100–120 (QLGGFLFFIVSEVMMLAVMAY). At 121–139 (DRYVAICNPLLYMVVVSRR) the chain is on the cytoplasmic side. Residues 140–160 (LCLLLVSLTYLYGFSTAIVVS) traverse the membrane as a helical segment. The Extracellular segment spans residues 161-197 (PCIFSVSYCSSNIINHFYCDIAPLLALSCSDTYIPET). A helical membrane pass occupies residues 198-217 (IVFISAATNLVFSMITVLVS). Over 218 to 237 (YFNIVLSILRIRSPEGRKKA) the chain is Cytoplasmic. A helical membrane pass occupies residues 238 to 258 (FSTCASHMIAVTVFYGTMLFM). The Extracellular portion of the chain corresponds to 259–271 (YLQPQTNHSLDTD). An N-linked (GlcNAc...) asparagine glycan is attached at asparagine 265. A helical membrane pass occupies residues 272-292 (KMASVFYTLVIPMLNPLIYSL). Residues 293–315 (RNNDVNVALKKFMENPCYSFKSM) are Cytoplasmic-facing.

The protein belongs to the G-protein coupled receptor 1 family.

The protein resides in the cell membrane. Odorant receptor. This is Olfactory receptor 8J3 (OR8J3) from Homo sapiens (Human).